The sequence spans 599 residues: Sodium-dependent phosphate transport protein 2C (599 aa).

The Cytoplasmic portion of the chain corresponds to 1–76; it reads MPSSLPGSQV…RRVAGSVLKA (76 aa). A Phosphoserine modification is found at Ser4. A helical membrane pass occupies residues 77–97; the sequence is CGLLGSLYFFICSLDVLSSAF. Topologically, residues 98-111 are extracellular; it reads QLLGSKVAGDIFKD. The helical transmembrane segment at 112-132 threads the bilayer; the sequence is NVVLSNPVAGLVIGVLVTALV. Residues 133 to 188 are Cytoplasmic-facing; sequence QSSSTSSSIVVSMVAAKLLTVRVSVPIIMGVNVGTSITSTLVSMAQSGDRDEFQRA. A helical membrane pass occupies residues 189 to 209; sequence FSGSAVHGIFNWLTVLVLLPL. Over 210 to 322 the chain is Extracellular; the sequence is ESATALLERL…FAGTELTDLA (113 aa). 4 N-linked (GlcNAc...) asparagine glycosylation sites follow: Asn265, Asn268, Asn286, and Asn299. Cys276 and Cys309 are disulfide-bonded. Residues 323 to 343 form a helical membrane-spanning segment; the sequence is VGCILLAGSLLVLCGCLVLIV. The Cytoplasmic segment spans residues 344 to 367; it reads KLLNSVLRGRVAQVVRTVINADFP. A helical membrane pass occupies residues 368-388; the sequence is FPLGWLGGYLAVLAGAGLTFA. Topologically, residues 389-445 are extracellular; the sequence is LQSSSVFTAAVVPLMGVGVISLDRAYPLLLGSNIGTTTTALLAALASPADRMLSALQ. The chain crosses the membrane as a helical span at residues 446-466; it reads VALIHFFFNLAGILLWYLVPA. Residues 467-485 are Cytoplasmic-facing; that stretch reads LRLPIPLARHFGVVTARYR. Residues 486–506 traverse the membrane as a helical segment; sequence WVAGVYLLLGFLLLPLAAFGL. The Extracellular portion of the chain corresponds to 507-510; the sequence is SLAG. The chain crosses the membrane as a helical span at residues 511 to 531; sequence GMELAAVGGPLVGLVLLVILV. Over 532-599 the chain is Cytoplasmic; it reads TVLQRRRPAW…NPEILASQQL (68 aa).

This sequence belongs to the SLC34A transporter family. Expressed only in the kidney.

Its subcellular location is the apical cell membrane. The catalysed reaction is 2 Na(+)(out) + phosphate(out) = 2 Na(+)(in) + phosphate(in). Its function is as follows. Involved in actively transporting phosphate into cells via Na(+) cotransport in the renal brush border membrane. The cotransport has a Na(+):Pi stoichiometry of 2:1 and is electroneutral. The protein is Sodium-dependent phosphate transport protein 2C (SLC34A3) of Homo sapiens (Human).